The sequence spans 257 residues: 1-(5-phosphoribosyl)-5-[(5-phosphoribosylamino)methylideneamino] imidazole-4-carboxamide isomerase (257 aa).

The active-site Proton acceptor is aspartate 8. Aspartate 129 acts as the Proton donor in catalysis.

It belongs to the HisA/HisF family.

It localises to the cytoplasm. It catalyses the reaction 1-(5-phospho-beta-D-ribosyl)-5-[(5-phospho-beta-D-ribosylamino)methylideneamino]imidazole-4-carboxamide = 5-[(5-phospho-1-deoxy-D-ribulos-1-ylimino)methylamino]-1-(5-phospho-beta-D-ribosyl)imidazole-4-carboxamide. The protein operates within amino-acid biosynthesis; L-histidine biosynthesis; L-histidine from 5-phospho-alpha-D-ribose 1-diphosphate: step 4/9. The sequence is that of 1-(5-phosphoribosyl)-5-[(5-phosphoribosylamino)methylideneamino] imidazole-4-carboxamide isomerase from Rippkaea orientalis (strain PCC 8801 / RF-1) (Cyanothece sp. (strain PCC 8801)).